Here is a 360-residue protein sequence, read N- to C-terminus: 8-hydroxygeraniol dehydrogenase (360 aa).

Zn(2+) contacts are provided by Cys50, His72, Cys103, Cys106, Cys109, Cys117, and Cys166.

It belongs to the zinc-containing alcohol dehydrogenase family. Requires Zn(2+) as cofactor. As to expression, present in seedlings and vascular tissues (at protein level). Restricted to the epidermis.

It carries out the reaction (6E)-8-hydroxygeraniol + 2 NADP(+) = (6E)-8-oxogeranial + 2 NADPH + 2 H(+). Functionally, dehydrogenase involved in the biosynthesis of oxogeranial from hydroxygeraniol, a precursor of the terpenoid indole alkaloids such as vinblastine and vincristine. This chain is 8-hydroxygeraniol dehydrogenase (10HGO), found in Catharanthus roseus (Madagascar periwinkle).